The chain runs to 235 residues: uncharacterized protein (235 aa).

This is an uncharacterized protein from Shigella flexneri.